Consider the following 1229-residue polypeptide: ABC transporter B family member 22 (1229 aa).

6 consecutive transmembrane segments (helical) span residues 22-42, 69-89, 145-167, 171-193, 251-271, and 274-294; these read MGLG…IFFI, VALL…GYCW, LPNF…IMLW, IVGF…ALIN, GIAI…TWYG, and MVMY…CITY. Residues 22-311 form the ABC transmembrane type-1 1 domain; that stretch reads MGLGLIGAVG…GLSNLKYFSE (290 aa). The ABC transporter 1 domain occupies 346 to 582; sequence VQFKHVKFMY…VDGQYTSLVR (237 aa). 381-388 is a binding site for ATP; that stretch reads GGSGSGKS. Asn529 and Asn594 each carry an N-linked (GlcNAc...) asparagine glycan. A run of 2 helical transmembrane segments spans residues 661–681 and 703–723; these read ALYG…YAYA and IYVL…IIQQ. The ABC transmembrane type-1 2 domain occupies 661–949; the sequence is ALYGCLSAVL…AGAMTMDLAK (289 aa). The N-linked (GlcNAc...) asparagine glycan is linked to Asn758. 4 helical membrane-spanning segments follow: residues 782 to 800, 807 to 823, 885 to 908, and 923 to 943; these read VSLL…TLGL, SIVM…CFYT, WLAG…NYWY, and FFEL…AGAM. The region spanning 984-1222 is the ABC transporter 2 domain; sequence IKFVNVDFAY…GPTGVYFSLV (239 aa). Asn1004 is a glycosylation site (N-linked (GlcNAc...) asparagine). 1019 to 1026 contacts ATP; the sequence is GPSGSGKS. The N-linked (GlcNAc...) asparagine glycan is linked to Asn1157.

Belongs to the ABC transporter superfamily. ABCB family. Multidrug resistance exporter (TC 3.A.1.201) subfamily.

It is found in the membrane. The protein is ABC transporter B family member 22 (ABCB22) of Arabidopsis thaliana (Mouse-ear cress).